The primary structure comprises 420 residues: Serine hydroxymethyltransferase (420 aa).

Residues L121 and 125–127 contribute to the (6S)-5,6,7,8-tetrahydrofolate site; that span reads GHL. The residue at position 230 (K230) is an N6-(pyridoxal phosphate)lysine. 355-357 is a (6S)-5,6,7,8-tetrahydrofolate binding site; sequence SPF.

It belongs to the SHMT family. Homodimer. It depends on pyridoxal 5'-phosphate as a cofactor.

The protein resides in the cytoplasm. It catalyses the reaction (6R)-5,10-methylene-5,6,7,8-tetrahydrofolate + glycine + H2O = (6S)-5,6,7,8-tetrahydrofolate + L-serine. It participates in one-carbon metabolism; tetrahydrofolate interconversion. It functions in the pathway amino-acid biosynthesis; glycine biosynthesis; glycine from L-serine: step 1/1. Functionally, catalyzes the reversible interconversion of serine and glycine with tetrahydrofolate (THF) serving as the one-carbon carrier. This reaction serves as the major source of one-carbon groups required for the biosynthesis of purines, thymidylate, methionine, and other important biomolecules. Also exhibits THF-independent aldolase activity toward beta-hydroxyamino acids, producing glycine and aldehydes, via a retro-aldol mechanism. The chain is Serine hydroxymethyltransferase from Streptococcus gordonii (strain Challis / ATCC 35105 / BCRC 15272 / CH1 / DL1 / V288).